A 139-amino-acid chain; its full sequence is MKKGTVLNSDISSVISRLGHTDTLVVCDAGLPIPKSTTRIDMALTQGVPSFMQVLGVVTNEMQVEAVIIAEEIKQHNPQLHETLLTHLEHLQKHQGNTIEIRYTTHEQFKQQTAESQAVIRSGECSPYANIILCAGVTF.

H20 serves as the catalytic Proton donor. Residues D28, H106, and 128-130 (YAN) contribute to the substrate site.

The protein belongs to the RbsD / FucU family. RbsD subfamily. Homodecamer.

It is found in the cytoplasm. The enzyme catalyses beta-D-ribopyranose = beta-D-ribofuranose. The protein operates within carbohydrate metabolism; D-ribose degradation; D-ribose 5-phosphate from beta-D-ribopyranose: step 1/2. Catalyzes the interconversion of beta-pyran and beta-furan forms of D-ribose. The protein is D-ribose pyranase of Escherichia coli O127:H6 (strain E2348/69 / EPEC).